The chain runs to 307 residues: 4-hydroxybenzoate geranyltransferase 1 (307 aa).

A run of 8 helical transmembrane segments spans residues 38–58 (PIGS…AADL), 62–82 (PKML…GCTI), 120–140 (LFIG…LAIV), 154–174 (ITYW…LLGS), 179–199 (GSVV…WTLV), 230–250 (MWIS…GLIL), 252–272 (IGLP…WQIF), and 286–306 (FVSN…GRLF).

The protein belongs to the UbiA prenyltransferase family. The cofactor is Mg(2+). In terms of tissue distribution, expressed only in roots.

It is found in the endoplasmic reticulum membrane. It carries out the reaction 4-hydroxybenzoate + (2E)-geranyl diphosphate = 3-geranyl-4-hydroxybenzoate + diphosphate. Its function is as follows. Prenyltransferase involved in the biosynthesis of shikonin, a naphthoquinone secondary metabolite. Could accept only geranyl diphosphate and not dimethylallyl diphosphate, farnesyl diphosphate, or geranylgeranyl diphosphate as substrate. The chain is 4-hydroxybenzoate geranyltransferase 1 (PGT-1) from Lithospermum erythrorhizon (Purple gromwell).